A 262-amino-acid polypeptide reads, in one-letter code: MSLKINNFNFLRPISRKKHRKKIKLNCLNLPFKGKDIWTLYELSWLNKNGLPQIAIAKIEIDVNSANIIESKSFKIYINSFNQMKFNNNIDFINILTNDLTKCICGQISIKLFSLDAIKNETITDFHGICIDNQNIKIESYKYTPSFLMINSERKIIKEDLYTHLFKSNCPVTQQPDWASIYIAYTGLSINHASLLRYLISFRSHNEFHEECIERIFNDINNICKPEELSVYARYTRRGGIDINPWRSNTNFSPFLTRLARQ.

I69–S71 provides a ligand contact to substrate. S71–K72 contacts NADPH. Catalysis depends on C170, which acts as the Thioimide intermediate. D177 functions as the Proton donor in the catalytic mechanism. H209–E210 lines the substrate pocket. R238–G239 provides a ligand contact to NADPH.

The protein belongs to the GTP cyclohydrolase I family. QueF type 2 subfamily. In terms of assembly, homodimer.

It localises to the cytoplasm. It catalyses the reaction 7-aminomethyl-7-carbaguanine + 2 NADP(+) = 7-cyano-7-deazaguanine + 2 NADPH + 3 H(+). The protein operates within tRNA modification; tRNA-queuosine biosynthesis. Its function is as follows. Catalyzes the NADPH-dependent reduction of 7-cyano-7-deazaguanine (preQ0) to 7-aminomethyl-7-deazaguanine (preQ1). In Buchnera aphidicola subsp. Schizaphis graminum (strain Sg), this protein is NADPH-dependent 7-cyano-7-deazaguanine reductase.